The following is an 835-amino-acid chain: Axin-1 (835 aa).

Residues 16–60 are disordered; the sequence is LGSSFTEDAPRPPVPGEEGDLVSSDGRQYNHSFYSSKSDSLKNEA. Residues 40 to 53 are compositionally biased toward polar residues; it reads DGRQYNHSFYSSKS. Positions 92 to 214 constitute an RGS domain; it reads SLHSLLDDQD…LKSDIYLEYT (123 aa). The tract at residues 318-349 is disordered; the sequence is ATSANDSEQQSMSSDADTLSLTDSSVDGVPPY. Over residues 328 to 344 the composition is skewed to low complexity; that stretch reads SMSSDADTLSLTDSSVD. An interaction with GSK3B region spans residues 351-436; it reads YRKPHRREIH…DADISTGPSL (86 aa). The tract at residues 437-512 is interaction with beta-catenin; the sequence is ANHRVPPAVH…SPDGLPAGKI (76 aa). Disordered stretches follow at residues 485–530 and 602–627; these read KTPG…QARQ and GYSSKGSTLSKRPVRKGEDGRNFEMR. The segment covering 616 to 627 has biased composition (basic and acidic residues); sequence RKGEDGRNFEMR. The DIX domain occupies 753 to 835; the sequence is CENITVAYYF…KIIGKVEKVD (83 aa).

In terms of assembly, homodimer. Interacts with dixdc1. Interacts with hwa; leading to promote the tankyrase-mediated degradation of axin1. Post-translationally, ADP-ribosylated by tankyrase tnks and tnks2. Poly-ADP-ribosylated protein is recognized by rnf146, followed by ubiquitination at 'Lys-48' and subsequent activation of the Wnt signaling pathway. Ubiquitinated by rnf146 when poly-ADP-ribosylated, leading to its degradation and subsequent activation of the Wnt signaling pathway.

Its subcellular location is the cytoplasm. The protein resides in the nucleus. The protein localises to the membrane. It is found in the cell membrane. In terms of biological role, component of the beta-catenin destruction complex required for regulating ctnnb1 levels through phosphorylation and ubiquitination, and modulating Wnt-signaling. Controls dorsoventral patterning via two opposing effects: down-regulates ctnnb1 to inhibit the Wnt signaling pathway and ventralize embryos, but also dorsalizes embryos by activating a Wnt-independent JNK signaling pathway. This is Axin-1 (axin1) from Danio rerio (Zebrafish).